Consider the following 63-residue polypeptide: Large ribosomal subunit protein bL28A (63 aa).

It belongs to the bacterial ribosomal protein bL28 family.

The protein is Large ribosomal subunit protein bL28A of Nocardia farcinica (strain IFM 10152).